The primary structure comprises 241 residues: Triosephosphate isomerase (241 aa).

Asparagine 9 to lysine 11 contacts substrate. Histidine 96 functions as the Electrophile in the catalytic mechanism. Glutamate 165 serves as the catalytic Proton acceptor. Residues glycine 171, serine 204, and glycine 225–glycine 226 each bind substrate.

The protein belongs to the triosephosphate isomerase family. As to quaternary structure, homodimer.

It localises to the cytoplasm. It carries out the reaction D-glyceraldehyde 3-phosphate = dihydroxyacetone phosphate. The protein operates within carbohydrate biosynthesis; gluconeogenesis. It participates in carbohydrate degradation; glycolysis; D-glyceraldehyde 3-phosphate from glycerone phosphate: step 1/1. In terms of biological role, involved in the gluconeogenesis. Catalyzes stereospecifically the conversion of dihydroxyacetone phosphate (DHAP) to D-glyceraldehyde-3-phosphate (G3P). The polypeptide is Triosephosphate isomerase (Acaryochloris marina (strain MBIC 11017)).